We begin with the raw amino-acid sequence, 526 residues long: UDP-N-acetylmuramoyl-L-alanyl-D-glutamate--2,6-diaminopimelate ligase (526 aa).

L48 and S50 together coordinate UDP-N-acetyl-alpha-D-muramoyl-L-alanyl-D-glutamate. 136-142 (GTSGKTT) lines the ATP pocket. UDP-N-acetyl-alpha-D-muramoyl-L-alanyl-D-glutamate is bound by residues 178–179 (TT), S205, and R213. The residue at position 245 (K245) is an N6-carboxylysine. Meso-2,6-diaminopimelate is bound by residues R408, 432–435 (DNPR), G490, and E494. The short motif at 432–435 (DNPR) is the Meso-diaminopimelate recognition motif element.

It belongs to the MurCDEF family. MurE subfamily. Mg(2+) is required as a cofactor. In terms of processing, carboxylation is probably crucial for Mg(2+) binding and, consequently, for the gamma-phosphate positioning of ATP.

Its subcellular location is the cytoplasm. The catalysed reaction is UDP-N-acetyl-alpha-D-muramoyl-L-alanyl-D-glutamate + meso-2,6-diaminopimelate + ATP = UDP-N-acetyl-alpha-D-muramoyl-L-alanyl-gamma-D-glutamyl-meso-2,6-diaminopimelate + ADP + phosphate + H(+). Its pathway is cell wall biogenesis; peptidoglycan biosynthesis. Functionally, catalyzes the addition of meso-diaminopimelic acid to the nucleotide precursor UDP-N-acetylmuramoyl-L-alanyl-D-glutamate (UMAG) in the biosynthesis of bacterial cell-wall peptidoglycan. This chain is UDP-N-acetylmuramoyl-L-alanyl-D-glutamate--2,6-diaminopimelate ligase, found in Corynebacterium efficiens (strain DSM 44549 / YS-314 / AJ 12310 / JCM 11189 / NBRC 100395).